The sequence spans 295 residues: METPAWPRVPRPETAVARTLLLGWVFAQVAGASGTTNTVAAYNLTWKSTNFKTILEWEPKPVNQVYTVQISTKSGDWKSKCFYTTDTECDLTDEIVKDVKQTYLARVFSYPAGNVESTGSAGEPLYENSPEFTPYLETNLGQPTIQSFEQVGTKVNVTVEDERTLVRRNNTFLSLRDVFGKDLIYTLYYWKSSSSGKKTAKTNTNEFLIDVDKGENYCFSVQAVIPSRTVNRKSTDSPVECMGQEKGEFREIFYIIGAVVFVVIILVIILAISLHKCRKAGVGQSWKENSPLNVS.

An N-terminal signal peptide occupies residues 1–32; sequence METPAWPRVPRPETAVARTLLLGWVFAQVAGA. Residues 33–251 lie on the Extracellular side of the membrane; sequence SGTTNTVAAY…MGQEKGEFRE (219 aa). 2 short sequence motifs (WKS motif) span residues 46-48 and 77-79; these read WKS. A disulfide bridge connects residues C81 and C89. N156 and N169 each carry an N-linked (GlcNAc...) asparagine glycan. A WKS motif motif is present at residues 190-192; it reads WKS. A disulfide bridge connects residues C218 and C241. A helical membrane pass occupies residues 252–274; it reads IFYIIGAVVFVVIILVIILAISL. Topologically, residues 275–295 are cytoplasmic; it reads HKCRKAGVGQSWKENSPLNVS. C277 is lipidated: S-palmitoyl cysteine.

The protein belongs to the tissue factor family. Interacts with HSPE; the interaction, inhibited by heparin, promotes the generation of activated factor X and activates coagulation in the presence of activated factor VII. Lung, placenta and pancreas.

It localises to the membrane. The protein resides in the secreted. In terms of biological role, initiates blood coagulation by forming a complex with circulating factor VII or VIIa. The [TF:VIIa] complex activates factors IX or X by specific limited proteolysis. TF plays a role in normal hemostasis by initiating the cell-surface assembly and propagation of the coagulation protease cascade. This chain is Tissue factor (F3), found in Homo sapiens (Human).